The primary structure comprises 195 residues: Calcineurin B homologous protein 1 (195 aa).

Gly-2 is lipidated: N-myristoyl glycine. Residues 2 to 6 (GSRAS) carry the Necessary for association with microtubule and interaction with GAPDH motif. EF-hand domains follow at residues 26 to 61 (SQIT…AINP), 66 to 101 (IINA…KSKD), 110 to 145 (SRSN…MVGV), and 151 to 186 (QLGS…VDVE). Ca(2+) contacts are provided by Asp-123, Asp-125, Asp-127, Lys-129, and Glu-134. The Nuclear export signal 1 motif lies at 138–147 (VLRMMVGVNI). Residues Asp-164, Asp-166, Asp-168, and Glu-175 each contribute to the Ca(2+) site. A Nuclear export signal 2 motif is present at residues 176-185 (FVKVLEKVDV).

Belongs to the calcineurin regulatory subunit family. CHP subfamily. Monomer. Interacts with STK17B; the interaction occurs in a calcium-independent manner and induces the translocation of CHP1 from the Golgi to the nucleus. Interacts with GAPDH; the interaction is direct, occurs in a N-myristoylation-dependent manner and facilitates the ability of CHP1 to bind microtubules. Interacts with KIF1B (via the C-terminal end of the kinesin-motor domain); the interaction occurs in a calcium-dependent manner. Associates (via C-terminal domain) with microtubules; the association occurs with polymerized microtubules during the cell cycle in a myristoylation- and calcium-independent manner and is enhanced by GAPDH. Interacts with PPP3CA. Interacts with SLC9A1/NHE1 (via the cytoplasmic C-terminal domain); the interaction occurs at the plasma membrane in a calcium-dependent manner and at a domain that is critical for growth factor stimulation of the exchanger. Interacts with SLC9A3; increases SLC9A3 trafficking and activity at the plasma membrane. In terms of processing, phosphorylated; decreased phosphorylation is associated with an increase in SLC9A1/NHE1 Na(+)/H(+) exchange activity. Phosphorylation occurs in serum-dependent manner. The phosphorylation state may regulate the binding to SLC9A1/NHE1. Post-translationally, both N-myristoylation and calcium-mediated conformational changes are essential for its function in exocytic traffic. N-myristoylation is required for its association with microtubules and interaction with GAPDH, but not for the constitutive association to membranes.

Its subcellular location is the nucleus. It is found in the cytoplasm. The protein resides in the cytoskeleton. It localises to the endomembrane system. The protein localises to the endoplasmic reticulum-Golgi intermediate compartment. Its subcellular location is the endoplasmic reticulum. It is found in the cell membrane. The protein resides in the membrane. In terms of biological role, calcium-binding protein involved in different processes such as regulation of vesicular trafficking, plasma membrane Na(+)/H(+) exchanger and gene transcription. Involved in the constitutive exocytic membrane traffic. Mediates the association between microtubules and membrane-bound organelles of the endoplasmic reticulum and Golgi apparatus and is also required for the targeting and fusion of transcytotic vesicles (TCV) with the plasma membrane. Functions as an integral cofactor in cell pH regulation by controlling plasma membrane-type Na(+)/H(+) exchange activity. Affects the pH sensitivity of SLC9A1/NHE1 by increasing its sensitivity at acidic pH. Required for the stabilization and localization of SLC9A1/NHE1 at the plasma membrane. Inhibits serum- and GTPase-stimulated Na(+)/H(+) exchange. Plays a role as an inhibitor of ribosomal RNA transcription by repressing the nucleolar UBF1 transcriptional activity. May sequester UBF1 in the nucleoplasm and limit its translocation to the nucleolus. Associates to the ribosomal gene promoter. Acts as a negative regulator of the calcineurin/NFAT signaling pathway. Inhibits NFAT nuclear translocation and transcriptional activity by suppressing the calcium-dependent calcineurin phosphatase activity. Also negatively regulates the kinase activity of the apoptosis-induced kinase STK17B. Inhibits both STK17B auto- and substrate-phosphorylations in a calcium-dependent manner. The polypeptide is Calcineurin B homologous protein 1 (CHP1) (Bos taurus (Bovine)).